The sequence spans 148 residues: MNSRHVGQDSTTRDWYRDPKTIAWISDAVMEKTLGVARRPIRVSDKVILNVLDSFLQNNRPAIGHGCGVTNNPSYVTCDKYCPSLAPIETNPVVVRVVEFISQYIRDEYSFQEAGKQWSAWPSDRIQKHSQIKVRDRRPIPFQFNMNF.

This sequence belongs to the IIV-6 395R family.

This is an uncharacterized protein from Aedes vexans (Inland floodwater mosquito).